A 145-amino-acid polypeptide reads, in one-letter code: Large ribosomal subunit protein uL16 (145 aa).

The span at 1 to 17 shows a compositional bias: basic residues; sequence MLMPKRVKHRRVHRGRM. Positions 1-22 are disordered; sequence MLMPKRVKHRRVHRGRMTGKAT.

Belongs to the universal ribosomal protein uL16 family. Part of the 50S ribosomal subunit.

Its function is as follows. Binds 23S rRNA and is also seen to make contacts with the A and possibly P site tRNAs. In Ruminiclostridium cellulolyticum (strain ATCC 35319 / DSM 5812 / JCM 6584 / H10) (Clostridium cellulolyticum), this protein is Large ribosomal subunit protein uL16.